Consider the following 304-residue polypeptide: Homoserine kinase (304 aa).

90-100 (PLARGLGSSAS) contacts ATP.

The protein belongs to the GHMP kinase family. Homoserine kinase subfamily.

It localises to the cytoplasm. It carries out the reaction L-homoserine + ATP = O-phospho-L-homoserine + ADP + H(+). The protein operates within amino-acid biosynthesis; L-threonine biosynthesis; L-threonine from L-aspartate: step 4/5. Catalyzes the ATP-dependent phosphorylation of L-homoserine to L-homoserine phosphate. This Staphylococcus aureus (strain MRSA252) protein is Homoserine kinase.